Reading from the N-terminus, the 296-residue chain is ADP-dependent (S)-NAD(P)H-hydrate dehydratase (296 aa).

The region spanning Thr18–Ile292 is the YjeF C-terminal domain. Ala53, Gly113, and His165 together coordinate (6S)-NADPHX. Residues Lys202–Thr206 and Gly231 contribute to the AMP site. Asp232 contributes to the (6S)-NADPHX binding site.

It belongs to the NnrD/CARKD family. In terms of assembly, homotetramer. Mg(2+) serves as cofactor.

The catalysed reaction is (6S)-NADHX + ADP = AMP + phosphate + NADH + H(+). It catalyses the reaction (6S)-NADPHX + ADP = AMP + phosphate + NADPH + H(+). Functionally, catalyzes the dehydration of the S-form of NAD(P)HX at the expense of ADP, which is converted to AMP. Together with NAD(P)HX epimerase, which catalyzes the epimerization of the S- and R-forms, the enzyme allows the repair of both epimers of NAD(P)HX, a damaged form of NAD(P)H that is a result of enzymatic or heat-dependent hydration. The sequence is that of ADP-dependent (S)-NAD(P)H-hydrate dehydratase from Neisseria meningitidis serogroup B (strain ATCC BAA-335 / MC58).